Reading from the N-terminus, the 463-residue chain is Chaperone SurA (463 aa).

A signal peptide spans 1 to 25 (MTKPFSVVLASLLAITSTVSPLASA). PpiC domains are found at residues 174–276 (GSQY…KLVE) and 289–388 (VTEY…QRVG). Disordered stretches follow at residues 329–348 (ATAKESSEDTNSRGQGGDLG) and 431–463 (YRTGDRADDNATAAPAKSPDPAAPSPPPAKPTR). The segment covering 441–450 (ATAAPAKSPD) has biased composition (low complexity). The span at 451–463 (PAAPSPPPAKPTR) shows a compositional bias: pro residues.

It is found in the periplasm. The catalysed reaction is [protein]-peptidylproline (omega=180) = [protein]-peptidylproline (omega=0). In terms of biological role, chaperone involved in the correct folding and assembly of outer membrane proteins. Recognizes specific patterns of aromatic residues and the orientation of their side chains, which are found more frequently in integral outer membrane proteins. May act in both early periplasmic and late outer membrane-associated steps of protein maturation. The protein is Chaperone SurA of Xanthomonas axonopodis pv. citri (strain 306).